Reading from the N-terminus, the 302-residue chain is MQDRIVRATAANGGIRLVAVLTTESSLEAKKRHGLSYLTTCILGRAFSASLLLASSMKIMHGRVTLRVRSDGPLKGLLVDAGRDGKVRGYVGNPNLELDLVKIDNDKYSFDFTKALGTGYLNVIRDSGFGEPFTSTVELVNGNIAEDLASYLYHSEQTPSAVFIGEKIQNKSVICSGGLLAQVLPKKDTDPLLISLLEERCKEINSFSEDLFKSKHNLLELIRNIFPDIDDKSISEKARSQEVSFKCKCSKQRSLNAMKMLDKSELEDILKKDGKAELVCEFCKNKYLINFEEIKSMIENQS.

Cystine bridges form between Cys247/Cys249 and Cys280/Cys283.

It belongs to the HSP33 family. Under oxidizing conditions two disulfide bonds are formed involving the reactive cysteines. Under reducing conditions zinc is bound to the reactive cysteines and the protein is inactive.

The protein resides in the cytoplasm. Redox regulated molecular chaperone. Protects both thermally unfolding and oxidatively damaged proteins from irreversible aggregation. Plays an important role in the bacterial defense system toward oxidative stress. The chain is 33 kDa chaperonin from Prochlorococcus marinus (strain AS9601).